The sequence spans 157 residues: Ribosome maturation factor RimP (157 aa).

It belongs to the RimP family.

It is found in the cytoplasm. In terms of biological role, required for maturation of 30S ribosomal subunits. The sequence is that of Ribosome maturation factor RimP from Bacillus licheniformis (strain ATCC 14580 / DSM 13 / JCM 2505 / CCUG 7422 / NBRC 12200 / NCIMB 9375 / NCTC 10341 / NRRL NRS-1264 / Gibson 46).